The primary structure comprises 83 residues: Short neurotoxin 1 (83 aa).

Positions 1–21 are cleaved as a signal peptide; the sequence is MKTLLLTLVVVTIVCLDLGYT. 4 cysteine pairs are disulfide-bonded: C24-C45, C38-C62, C64-C75, and C76-C81.

The protein belongs to the three-finger toxin family. Short-chain subfamily. Type I alpha-neurotoxin sub-subfamily. As to expression, expressed by the venom gland.

The protein resides in the secreted. In terms of biological role, binds to muscle nicotinic acetylcholine receptor (nAChR) and inhibit acetylcholine from binding to the receptor, thereby impairing neuromuscular transmission. This is Short neurotoxin 1 from Oxyuranus scutellatus scutellatus (Australian taipan).